Reading from the N-terminus, the 492-residue chain is FAD-linked oxidoreductase pgmH (492 aa).

In terms of domain architecture, FAD-binding PCMH-type spans 54-224 (SIRLATLVVY…TEFKYRVHKQ (171 aa)).

The protein belongs to the oxygen-dependent FAD-linked oxidoreductase family. FAD is required as a cofactor.

The protein operates within pigment biosynthesis. It participates in secondary metabolite biosynthesis. Functionally, FAD-linked oxidoreductase; part of the gene cluster that mediates the biosynthesis of pleosporalin A, ascomycone A, as well as a third cryptic naphthoquinone derived pigment, all responsible for the coloration of conidia. Essential for the production of pleosporalin A, but not the 2 other final products. The pathway begins with the biosynthesis of the cyclized heptaketide 3-acetonyl-1,6,8-trihydroxy-2-naphthaldehyde by the NR-PKS pgmA. The C-6 hydroxyl group is further methylated by the O-methyltransferase pgmB to yield fusarubinaldehyde which is in turn oxidized by the cytochrome P450 monooxygenase pgmC at C-9. The C-1 hydroxyl group is then methylated spontaneously. Although pgmE, pgmD and pgmH are essential for the production of pleosporalin A, it is not the case for the 2 other final products and it remains difficult to assign a specific function to each enzyme. PgmF and pgmG seem not to be involved in pigment biosynthesis although they were regulated by the cluster-specific transcription factor pgmR. The protein is FAD-linked oxidoreductase pgmH of Aspergillus terreus.